Reading from the N-terminus, the 435-residue chain is MKKKIVAIVGKPNVGKSSLFNRIIKEKKSIVDNKPGVTRDRIYSNAEWLTREFILIDTGGISVDQQLFSNEIQIQTQIAIEQADVIIFVVDFLNRLDKDDKIIAKILHKSKKPVILAINKYDKKTIDEHNYEFMNLGFSDLYFISSTHGIGIGDLLDKVISYISKNDVELKDDSTKIAIIGKPNVGKSSLVNSLVNENRMIVSEIEGTTLDAVDISFSYNKKKYIVIDTAGIRKKSKLGQTVEKYSYLRSLSAIANSDIVLLMIDATKPITDQDTNIGGLIYDEKKPVIIVVNKWDLIKNKQEQILKKEEEIRAYFKYLSYAKIIFISALDKTRVTKILDLIDEIKQSLSVKVKTYVLNEVLNKAQLINPAPEFNGNRLKIYYASQVQAYIPTFVLFCNNPNYLHFSYKRFLENQIRFSFGFDSIPINLIFRERK.

EngA-type G domains are found at residues 4–167 and 175–350; these read KIVA…SKND and TKIA…QSLS. Residues 10-17, 57-61, 119-122, 181-188, 228-232, and 293-296 contribute to the GTP site; these read GKPNVGKS, DTGGI, NKYD, DTAGI, and NKWD. Residues 351-435 enclose the KH-like domain; that stretch reads VKVKTYVLNE…PINLIFRERK (85 aa).

The protein belongs to the TRAFAC class TrmE-Era-EngA-EngB-Septin-like GTPase superfamily. EngA (Der) GTPase family. Associates with the 50S ribosomal subunit.

In terms of biological role, GTPase that plays an essential role in the late steps of ribosome biogenesis. This chain is GTPase Der, found in Mycoplasma capricolum subsp. capricolum (strain California kid / ATCC 27343 / NCTC 10154).